The following is a 693-amino-acid chain: Adhesion G-protein coupled receptor G1 (693 aa).

The first 25 residues, 1–25 (MTPQSLLQTTLFLLSLLFLVQGAHG), serve as a signal peptide directing secretion. 26–33 (RGHREDFR) is a binding site for heparin. The Extracellular portion of the chain corresponds to 26-401 (RGHREDFRFC…SVEVDAVHKH (376 aa)). Cystine bridges form between Cys-35/Cys-91 and Cys-121/Cys-177. N-linked (GlcNAc...) asparagine glycans are attached at residues Asn-39, Asn-148, and Asn-171. 190 to 200 (LKHPQKASRRP) is a binding site for heparin. A GAIN-B domain is found at 224 to 395 (DMVSFEEDRI…AVLMVSSVEV (172 aa)). N-linked (GlcNAc...) asparagine glycans are attached at residues Asn-234, Asn-303, Asn-324, and Asn-341. Cystine bridges form between Cys-346/Cys-377 and Cys-366/Cys-379. The GPS stretch occupies residues 346-395 (CVFWVEDPTLSSPGHWSSAGCETVRRETQTSCFCNHLTYFAVLMVSSVEV). A stachel region spans residues 384–397 (YFAVLMVSSVEVDA). A helical transmembrane segment spans residues 402-424 (YLSLLSYVGCVVSALACLVTIAA). Residues 425-437 (YLCSRVPLPCRRK) are Cytoplasmic-facing. The helical transmembrane segment at 438 to 460 (PRDYTIKVHMNLLLAVFLLDTSF) threads the bilayer. At 461–465 (LLSEP) the chain is on the extracellular side. A helical transmembrane segment spans residues 466–495 (VALTGSEAGCRASAIFLHFSLLTCLSWMGL). Cys-475 and Cys-562 are disulfide-bonded. Residues 496–510 (EGYNLYRLVVEVFGT) are Cytoplasmic-facing. A helical membrane pass occupies residues 511–533 (YVPGYLLKLSAMGWGFPIFLVTL). At 534 to 562 (VALVDVDNYGPIILAVHRTPEGVIYPSMC) the chain is on the extracellular side. The chain crosses the membrane as a helical span at residues 563–588 (WIRDSLVSYITNLGLFSLVFLFNMAM). The Cytoplasmic portion of the chain corresponds to 589 to 602 (LATMVVQILRLRPH). A helical transmembrane segment spans residues 603 to 624 (TQKWSHVLTLLGLSLVLGLPWA). At 625 to 628 (LIFF) the chain is on the extracellular side. The helical transmembrane segment at 629-654 (SFASGTFQLVVLYLFSIITSFQGFLI) threads the bilayer. Topologically, residues 655-693 (FIWYWSMRLQARGGPSPLKSNSDSARLPISSGSTSSSRI) are cytoplasmic. The interval 670 to 693 (SPLKSNSDSARLPISSGSTSSSRI) is disordered. A compositionally biased stretch (low complexity) spans 684 to 693 (SSGSTSSSRI).

The protein belongs to the G-protein coupled receptor 2 family. LN-TM7 subfamily. As to quaternary structure, heterodimer of 2 chains generated by proteolytic processing; the large extracellular N-terminal fragment (ADGRG1 NT) and the membrane-bound C-terminal fragment (ADGRG1-CT) predominantly remain associated and non-covalently linked. ADGRG1 NT self-associates in a trans-trans manner; the homophilic interaction enhances receptor signaling. Interacts with TGM2. Interacts with heparin; leading to the reduction of ADGRG1 shedding. Interacts with COL3A1. Part of a GPCR-tetraspanin complex at least consisting of ADGRG1, CD81, eventually CD9, and GNA11 in which CD81 is enhancing the association of ADGRG1 with GNA11. Autoproteolytically cleaved into 2 fragments; the large extracellular N-terminal fragment (ADGRG1 NT) and the membrane-bound C-terminal fragment (ADGRG1 CT) predominantly remain associated and non-covalently linked. Shedding to yield the secreted ADGRG1 N-terminal fragment seems to involve metalloprotease(s). Post-translationally, N-glycosylated. Contains sialic acid residues. In terms of processing, ubiquitinated. Undergoes polyubiquitination upon activation. As to expression, widely distributed with highest levels found in thyroid gland, brain and heart. Expressed in a great number of tumor cells. Expression is down-regulated in different tumors from highly metastatic cells.

It is found in the cell membrane. The protein resides in the secreted. It localises to the membrane raft. Forms a heterodimer of 2 chains generated by proteolytic processing that remain associated through non-covalent interactions mediated by the GAIN-B domain. In the inactivated receptor, the Stachel sequence (also named stalk) is embedded in the GAIN-B domain, where it adopts a beta-strand conformation. On activation, the Stachel moves into the 7 transmembrane region and adopts a twisted hook-shaped configuration that forms contacts within the receptor, leading to coupling of a G-alpha protein, which activates signaling. The cleaved GAIN-B and N-terminal domains can then dissociate from the rest of the receptor. Adhesion G-protein coupled receptor (aGPCR) for steroid hormone 17alpha-hydroxypregnenolone (17-OH), which is involved in cell adhesion and cell-cell interactions. Ligand binding causes a conformation change that triggers signaling via guanine nucleotide-binding proteins (G proteins) and modulates the activity of downstream effectors, such as RhoA pathway. ADGRG1 is coupled to G(12) and/or G(13) G proteins (GNA12 and GNA13, respectively) and mediates the activation Rho small GTPases. Acts as a potent suppressor of ferroptosis: binding to 17-OH-binding initiates signaling that down-regulates CD36 and alleviates ferroptosis-induced liver injury. Ligand-binding also induces cell adhesion activity via association with proteins such as collagen III/COL3A1 and TGM2. Mediates cell matrix adhesion in developing neurons and hematopoietic stem cells. Involved in cortical development, specifically in maintenance of the pial basement membrane integrity and in cortical lamination: association with COL3A1 in the developing brain inhibits neuronal migration via activation of the RhoA pathway. Together with TGM2, acts as a regulator of myelination and myelin repair in oligodendrocyte precursor cells. Acts as a hemostatic sensor of shear force: G protein-coupled receptor signaling is activated in response to shear force in platelets, promoting G(13) G protein signaling, and platelet shape change and aggregation in a COL3A1-dependent manner. Acts as an inhibitor of VEGFA production thereby inhibiting angiogenesis through a signaling pathway mediated by PRKCA. Plays a role in the maintenance of hematopoietic stem cells in bone marrow niche. Plays an essential role in testis development. This is Adhesion G-protein coupled receptor G1 from Homo sapiens (Human).